Reading from the N-terminus, the 119-residue chain is Basic phospholipase A2 acanthin-1 (119 aa).

Intrachain disulfides connect Cys11–Cys71, Cys27–Cys118, Cys29–Cys45, Cys44–Cys99, Cys51–Cys92, Cys60–Cys85, and Cys78–Cys90. Residues Tyr28, Gly30, and Gly32 each contribute to the Ca(2+) site. Residue His48 is part of the active site. Asp49 is a binding site for Ca(2+). The active site involves Asp93.

It depends on Ca(2+) as a cofactor. As to expression, expressed by the venom gland.

The protein localises to the secreted. It catalyses the reaction a 1,2-diacyl-sn-glycero-3-phosphocholine + H2O = a 1-acyl-sn-glycero-3-phosphocholine + a fatty acid + H(+). In terms of biological role, snake venom phospholipase A2 (PLA2) that potently inhibits ADP-(IC(50)=10 nM) and collagen-induced (IC(50)=7 nM) platelet aggregation when tested on human whole blood. PLA2 catalyzes the calcium-dependent hydrolysis of the 2-acyl groups in 3-sn-phosphoglycerides. In Acanthophis antarcticus (Common death adder), this protein is Basic phospholipase A2 acanthin-1.